A 117-amino-acid polypeptide reads, in one-letter code: Immunoglobulin kappa variable 9-129 (117 aa).

The N-terminal stretch at 1–22 is a signal peptide; sequence MDMRAPAQVFGFLLLWFPGARC. The segment at 23–45 is framework-1; the sequence is DIQMTQSPSSLSASLGERVSLTC. Residues Cys-45 and Cys-110 are joined by a disulfide bond. Positions 46 to 56 are complementarity-determining-1; the sequence is RASQDIHGYLN. The framework-2 stretch occupies residues 57-71; that stretch reads LFQQKPGETIKHLIY. A complementarity-determining-2 region spans residues 72-78; the sequence is ETSNLDS. The segment at 79–110 is framework-3; it reads GVPKRFSGSRSGSDYSLIIGSLESEDFADYYC. A complementarity-determining-3 region spans residues 111–117; the sequence is LQYASSP.

The chain is Immunoglobulin kappa variable 9-129 from Mus musculus (Mouse).